The chain runs to 563 residues: Glucocorticoid modulatory element-binding protein 1 (563 aa).

A2 is modified (N-acetylalanine). The SAND domain occupies 72–156 (ASTIEANEDM…RKMMDSGQID (85 aa)). C103 is a Zn(2+) binding site. DNA contacts are provided by K129, K133, K136, and R147. H160, C164, and C168 together coordinate Zn(2+). Positions 304 to 355 (MDTVKKVLDNRKNQVEQGEEQFLYTLTDLERQLEEQKKQAQDHRLKSQTVQN) form a coiled coil. A disordered region spans residues 360-385 (PVSTPKPPKRPRLQRPASTTVLSPSP).

As to quaternary structure, homodimer, and heterodimer of GMEB1 and GMEB2. Interacts with TRIM63. Interacts with the glucocorticoid receptor (NR3C1) and NCOA2/TIF2. May interact with HSP27 and CREB-binding protein (CBP).

Its subcellular location is the nucleus. The protein localises to the cytoplasm. In terms of biological role, trans-acting factor that binds to glucocorticoid modulatory elements (GME) present in the TAT (tyrosine aminotransferase) promoter and increases sensitivity to low concentrations of glucocorticoids. Also binds to the transferrin receptor promoter. The chain is Glucocorticoid modulatory element-binding protein 1 (GMEB1) from Bos taurus (Bovine).